Consider the following 21-residue polypeptide: Fibrinogen beta chain (21 aa).

The residue at position 1 (Gln-1) is a Pyrrolidone carboxylic acid. A compositionally biased stretch (acidic residues) spans 1–11 (QFPTDYDEGED). The tract at residues 1–21 (QFPTDYDEGEDDRPKSGLGAR) is disordered. The O-linked (GalNAc...) threonine glycan is linked to Thr-4. Tyr-6 bears the Sulfotyrosine mark.

Heterohexamer; disulfide linked. Contains 2 sets of 3 non-identical chains (alpha, beta and gamma). The 2 heterotrimers are in head to head conformation with the N-termini in a small central domain. Post-translationally, conversion of fibrinogen to fibrin is triggered by thrombin, which cleaves fibrinopeptides A and B from alpha and beta chains, and thus exposes the N-terminal polymerization sites responsible for the formation of the soft clot.

It is found in the secreted. Functionally, cleaved by the protease thrombin to yield monomers which, together with fibrinogen alpha (FGA) and fibrinogen gamma (FGG), polymerize to form an insoluble fibrin matrix. Fibrin has a major function in hemostasis as one of the primary components of blood clots. In addition, functions during the early stages of wound repair to stabilize the lesion and guide cell migration during re-epithelialization. Was originally thought to be essential for platelet aggregation, based on in vitro studies using anticoagulated blood. However subsequent studies have shown that it is not absolutely required for thrombus formation in vivo. Enhances expression of SELP in activated platelets. Maternal fibrinogen is essential for successful pregnancy. Fibrin deposition is also associated with infection, where it protects against IFNG-mediated hemorrhage. May also facilitate the antibacterial immune response via both innate and T-cell mediated pathways. The polypeptide is Fibrinogen beta chain (FGB) (Syncerus caffer (African buffalo)).